Here is a 431-residue protein sequence, read N- to C-terminus: Tryptophan synthase beta chain 2 (431 aa).

Lys-111 bears the N6-(pyridoxal phosphate)lysine mark.

This sequence belongs to the TrpB family. Tetramer of two alpha and two beta chains. It depends on pyridoxal 5'-phosphate as a cofactor.

It carries out the reaction (1S,2R)-1-C-(indol-3-yl)glycerol 3-phosphate + L-serine = D-glyceraldehyde 3-phosphate + L-tryptophan + H2O. The protein operates within amino-acid biosynthesis; L-tryptophan biosynthesis; L-tryptophan from chorismate: step 5/5. In terms of biological role, the beta subunit is responsible for the synthesis of L-tryptophan from indole and L-serine. This Sulfurisphaera tokodaii (strain DSM 16993 / JCM 10545 / NBRC 100140 / 7) (Sulfolobus tokodaii) protein is Tryptophan synthase beta chain 2 (trpB2).